The chain runs to 1236 residues: DNA-directed RNA polymerase subunit beta (1236 aa).

The segment at Ile-1185–His-1236 is disordered. A compositionally biased stretch (acidic residues) spans Tyr-1201–Phe-1220.

The protein belongs to the RNA polymerase beta chain family. In terms of assembly, the RNAP catalytic core consists of 2 alpha, 1 beta, 1 beta' and 1 omega subunit. When a sigma factor is associated with the core the holoenzyme is formed, which can initiate transcription.

The enzyme catalyses RNA(n) + a ribonucleoside 5'-triphosphate = RNA(n+1) + diphosphate. DNA-dependent RNA polymerase catalyzes the transcription of DNA into RNA using the four ribonucleoside triphosphates as substrates. This is DNA-directed RNA polymerase subunit beta from Clostridium tetani (strain Massachusetts / E88).